A 438-amino-acid chain; its full sequence is V-type ATP synthase beta chain (438 aa).

It belongs to the ATPase alpha/beta chains family.

Functionally, produces ATP from ADP in the presence of a proton gradient across the membrane. The V-type beta chain is a regulatory subunit. The sequence is that of V-type ATP synthase beta chain from Chlamydia trachomatis serovar A (strain ATCC VR-571B / DSM 19440 / HAR-13).